Here is a 151-residue protein sequence, read N- to C-terminus: 3-hydroxyacyl-[acyl-carrier-protein] dehydratase FabZ (151 aa).

The active site involves His-49.

The protein belongs to the thioester dehydratase family. FabZ subfamily.

The protein resides in the cytoplasm. It catalyses the reaction a (3R)-hydroxyacyl-[ACP] = a (2E)-enoyl-[ACP] + H2O. Functionally, involved in unsaturated fatty acids biosynthesis. Catalyzes the dehydration of short chain beta-hydroxyacyl-ACPs and long chain saturated and unsaturated beta-hydroxyacyl-ACPs. The sequence is that of 3-hydroxyacyl-[acyl-carrier-protein] dehydratase FabZ from Bordetella parapertussis (strain 12822 / ATCC BAA-587 / NCTC 13253).